The primary structure comprises 590 residues: UvrABC system protein C (590 aa).

Residues 14–91 enclose the GIY-YIG domain; that stretch reads DQPGCYLMKD…IKKYDPKYNV (78 aa). One can recognise a UVR domain in the interval 196-231; it reads NEIKKELEAKMAEAAEKLEFERAKEFRDQLAHIEST.

Belongs to the UvrC family. Interacts with UvrB in an incision complex.

It is found in the cytoplasm. The UvrABC repair system catalyzes the recognition and processing of DNA lesions. UvrC both incises the 5' and 3' sides of the lesion. The N-terminal half is responsible for the 3' incision and the C-terminal half is responsible for the 5' incision. This chain is UvrABC system protein C, found in Bacillus velezensis (strain DSM 23117 / BGSC 10A6 / LMG 26770 / FZB42) (Bacillus amyloliquefaciens subsp. plantarum).